We begin with the raw amino-acid sequence, 428 residues long: MFPDIEVNDKGHLLIGGADAVELADEYGTPLYVIDEMRIRENYRRLYRAFSGEYSRFQVFYACKANTNLAVMRILEEEGSGIDAVSPGEIYTALMAGFDPDRILYTGNNVRDDELQFALDSGVRINVDSRSQLLRLSEIAPEGLRISFRVNPLVGAGHHEHCITGGEMSKFGVMEREAPEVYRMAMDLGFEPVGIHAHIGSGILDPEPFMLAVETLMDIAGRVHEATGVEFEFIDFGGGLGIPYTPEEEPLDIDEFASKITGLFKDKLSEYGLGRPMMCLEPGRYIVGDASYLLTRVNTIKESYRKFAGVDAGFNTLLRPAMYGSYHHILVAERPLDEPSEKMDVAGNVCESGDLFARDRQLPEINEGDVLAIMNAGAYSFSMSSQYNSRPRPAEVLVREGKVDVVRERETFSDLLRGQNVPARLLKR.

N6-(pyridoxal phosphate)lysine is present on lysine 64. Pyridoxal 5'-phosphate contacts are provided by residues glycine 239 and 281–284 (EPGR). Substrate is bound by residues arginine 284, arginine 319, and tyrosine 323. The active-site Proton donor is cysteine 350. Residues glutamate 351 and tyrosine 379 each coordinate substrate. Tyrosine 379 contacts pyridoxal 5'-phosphate.

Belongs to the Orn/Lys/Arg decarboxylase class-II family. LysA subfamily. As to quaternary structure, homodimer. Pyridoxal 5'-phosphate serves as cofactor.

It catalyses the reaction meso-2,6-diaminopimelate + H(+) = L-lysine + CO2. Its pathway is amino-acid biosynthesis; L-lysine biosynthesis via DAP pathway; L-lysine from DL-2,6-diaminopimelate: step 1/1. Specifically catalyzes the decarboxylation of meso-diaminopimelate (meso-DAP) to L-lysine. The protein is Diaminopimelate decarboxylase of Methanothermobacter thermautotrophicus (strain ATCC 29096 / DSM 1053 / JCM 10044 / NBRC 100330 / Delta H) (Methanobacterium thermoautotrophicum).